The chain runs to 320 residues: Bifunctional phosphoglucose/phosphomannose isomerase (320 aa).

Positions 20–153 constitute an SIS domain; the sequence is IAKDLTPYKG…NLLGVDKDEL (134 aa). D-fructose 6-phosphate is bound by residues Gly-37, Ser-38, Ser-80, Ser-82, Thr-85, and Arg-132. Glu-204 functions as the Proton acceptor in the catalytic mechanism. D-fructose 6-phosphate contacts are provided by His-220 and Lys-313. His-220 acts as the Proton donor in catalysis. Lys-313 acts as the Proton acceptor in catalysis.

This sequence belongs to the PGI/PMI family. Homodimer.

The catalysed reaction is alpha-D-glucose 6-phosphate = beta-D-fructose 6-phosphate. It catalyses the reaction D-mannose 6-phosphate = D-fructose 6-phosphate. Its function is as follows. Dual specificity isomerase that catalyzes the isomerization of both glucose-6-phosphate and mannose-6-phosphate to fructose-6-phosphate. In Aquifex aeolicus (strain VF5), this protein is Bifunctional phosphoglucose/phosphomannose isomerase.